Here is a 77-residue protein sequence, read N- to C-terminus: Small ribosomal subunit protein bS21 (77 aa).

The protein belongs to the bacterial ribosomal protein bS21 family.

This chain is Small ribosomal subunit protein bS21, found in Bartonella tribocorum (strain CIP 105476 / IBS 506).